A 201-amino-acid polypeptide reads, in one-letter code: 3-isopropylmalate dehydratase small subunit 1 (201 aa).

The protein belongs to the LeuD family. LeuD type 1 subfamily. In terms of assembly, heterodimer of LeuC and LeuD.

It carries out the reaction (2R,3S)-3-isopropylmalate = (2S)-2-isopropylmalate. The protein operates within amino-acid biosynthesis; L-leucine biosynthesis; L-leucine from 3-methyl-2-oxobutanoate: step 2/4. Functionally, catalyzes the isomerization between 2-isopropylmalate and 3-isopropylmalate, via the formation of 2-isopropylmaleate. This chain is 3-isopropylmalate dehydratase small subunit 1, found in Salmonella typhimurium (strain LT2 / SGSC1412 / ATCC 700720).